A 252-amino-acid chain; its full sequence is 3-deoxy-manno-octulosonate cytidylyltransferase (252 aa).

This sequence belongs to the KdsB family.

It is found in the cytoplasm. It catalyses the reaction 3-deoxy-alpha-D-manno-oct-2-ulosonate + CTP = CMP-3-deoxy-beta-D-manno-octulosonate + diphosphate. Its pathway is nucleotide-sugar biosynthesis; CMP-3-deoxy-D-manno-octulosonate biosynthesis; CMP-3-deoxy-D-manno-octulosonate from 3-deoxy-D-manno-octulosonate and CTP: step 1/1. It participates in bacterial outer membrane biogenesis; lipopolysaccharide biosynthesis. Functionally, activates KDO (a required 8-carbon sugar) for incorporation into bacterial lipopolysaccharide in Gram-negative bacteria. The polypeptide is 3-deoxy-manno-octulosonate cytidylyltransferase (Nitratidesulfovibrio vulgaris (strain DP4) (Desulfovibrio vulgaris)).